A 508-amino-acid polypeptide reads, in one-letter code: Beta-glucosidase 10 (508 aa).

The signal sequence occupies residues 1 to 22 (MKLYSLLSVFLVILLATSDSDA). A beta-D-glucoside-binding positions include Gln42, His142, and 187 to 188 (NE). Catalysis depends on Glu188, which acts as the Proton donor. Cysteines 207 and 215 form a disulfide. Residues Asn214 and Asn219 are each glycosylated (N-linked (GlcNAc...) asparagine). Tyr331 contacts a beta-D-glucoside. An N-linked (GlcNAc...) asparagine glycan is attached at Asn365. Glu398 provides a ligand contact to a beta-D-glucoside. Catalysis depends on Glu398, which acts as the Nucleophile. The N-linked (GlcNAc...) asparagine glycan is linked to Asn431. 2 residues coordinate a beta-D-glucoside: Trp441 and Phe457. 3 N-linked (GlcNAc...) asparagine glycosylation sites follow: Asn463, Asn485, and Asn501.

This sequence belongs to the glycosyl hydrolase 1 family.

It carries out the reaction Hydrolysis of terminal, non-reducing beta-D-glucosyl residues with release of beta-D-glucose.. The chain is Beta-glucosidase 10 from Arabidopsis thaliana (Mouse-ear cress).